The sequence spans 72 residues: Protein SlyX homolog (72 aa).

Belongs to the SlyX family.

This chain is Protein SlyX homolog, found in Bradyrhizobium diazoefficiens (strain JCM 10833 / BCRC 13528 / IAM 13628 / NBRC 14792 / USDA 110).